Reading from the N-terminus, the 146-residue chain is VHLTPEEKNAVTTLWGKVNVDEVGGEALGRLLLVYPWTQRFFESFGDLSSPDAVMGNPKVKAHGKKVLGAFSDGLNHLDNLKGTFAQLSELHCDKLHVDPENFKLLGNVLVCVLAHHFGKEFTPQVQAAYQKVVAGVANALAHKYH.

Val1 is modified (N-acetylvaline). In terms of domain architecture, Globin spans 2 to 146 (HLTPEEKNAV…VANALAHKYH (145 aa)). Thr12 carries the post-translational modification Phosphothreonine. Ser44 is subject to Phosphoserine. Lys59 carries the post-translational modification N6-acetyllysine. Position 63 (His63) interacts with heme b. Lys82 is modified (N6-acetyllysine). His92 is a binding site for heme b. Residue Cys93 is modified to S-nitrosocysteine. Lys144 is modified (N6-acetyllysine).

This sequence belongs to the globin family. As to quaternary structure, heterotetramer of two alpha chains and two beta chains. Red blood cells.

Functionally, involved in oxygen transport from the lung to the various peripheral tissues. The protein is Hemoglobin subunit beta (HBB) of Macaca mulatta (Rhesus macaque).